The sequence spans 248 residues: MTEANRILLGVNVDHVATLRQARGTRYPDPVKAALDAEEAGADGITVHLREDRRHIQERDVLMMKDALQTRMNFEMGVTEAMLAFAEQLRPEHVCLVPETRQELTTEGGLDVAGQEARIREAVERLRGCGAEVSLFIDADPRQIEAAARVGAPAIELHTGRYADAHSVAERACELARIRDGVEVGLSHGLIVNAGHGLHYHNAEAIAAIRGVNELNIGHAIVAHALFVGFKQAVKEMKHLILSAAARG.

Asn-12 is a binding site for 3-amino-2-oxopropyl phosphate. 14–15 (DH) serves as a coordination point for 1-deoxy-D-xylulose 5-phosphate. Arg-23 is a 3-amino-2-oxopropyl phosphate binding site. His-48 serves as the catalytic Proton acceptor. 2 residues coordinate 1-deoxy-D-xylulose 5-phosphate: Arg-50 and His-55. Glu-75 functions as the Proton acceptor in the catalytic mechanism. Thr-105 serves as a coordination point for 1-deoxy-D-xylulose 5-phosphate. Residue His-196 is the Proton donor of the active site. Residues Gly-197 and 218–219 (GH) each bind 3-amino-2-oxopropyl phosphate.

It belongs to the PNP synthase family. As to quaternary structure, homooctamer; tetramer of dimers.

It localises to the cytoplasm. The catalysed reaction is 3-amino-2-oxopropyl phosphate + 1-deoxy-D-xylulose 5-phosphate = pyridoxine 5'-phosphate + phosphate + 2 H2O + H(+). It participates in cofactor biosynthesis; pyridoxine 5'-phosphate biosynthesis; pyridoxine 5'-phosphate from D-erythrose 4-phosphate: step 5/5. Its function is as follows. Catalyzes the complicated ring closure reaction between the two acyclic compounds 1-deoxy-D-xylulose-5-phosphate (DXP) and 3-amino-2-oxopropyl phosphate (1-amino-acetone-3-phosphate or AAP) to form pyridoxine 5'-phosphate (PNP) and inorganic phosphate. This is Pyridoxine 5'-phosphate synthase from Stutzerimonas stutzeri (strain A1501) (Pseudomonas stutzeri).